Consider the following 225-residue polypeptide: Transcription factor MYB1 (225 aa).

HTH myb-type domains lie at 11-67 (LGRV…KPSI) and 68-118 (KRGH…YKKH). DNA-binding regions (H-T-H motif) lie at residues 39-63 (WKRV…LNYL) and 91-114 (WSLI…NTHL).

As to quaternary structure, no interactions with bHLH.

Its subcellular location is the nucleus. In terms of biological role, activates DODA1 and CYP76AD1 in the betalain red pigment pathway. This chain is Transcription factor MYB1, found in Beta vulgaris (Sugar beet).